Here is a 41-residue protein sequence, read N- to C-terminus: Histone H3.2 (41 aa).

The tract at residues 1 to 41 (MARAKQTARKSTGAEAPRKQLASKAARKSAPATGGIKKPHR) is disordered.

This sequence belongs to the histone H3 family. In terms of assembly, the nucleosome is a histone octamer containing two molecules each of H2A, H2B, H3 and H4 assembled in one H3-H4 heterotetramer and two H2A-H2B heterodimers. The octamer wraps approximately 147 bp of DNA.

It is found in the nucleus. The protein localises to the chromosome. Core component of nucleosome. Nucleosomes wrap and compact DNA into chromatin, limiting DNA accessibility to the cellular machineries which require DNA as a template. Histones thereby play a central role in transcription regulation, DNA repair, DNA replication and chromosomal stability. DNA accessibility is regulated via a complex set of post-translational modifications of histones, also called histone code, and nucleosome remodeling. This chain is Histone H3.2, found in Tetrahymena borealis.